The sequence spans 190 residues: Shikimate kinase (190 aa).

Position 22–27 (22–27 (GSGKST)) interacts with ATP. Residue serine 26 participates in Mg(2+) binding. The substrate site is built by aspartate 44, arginine 68, and glycine 90. Residue arginine 127 coordinates ATP. Arginine 146 serves as a coordination point for substrate.

It belongs to the shikimate kinase family. As to quaternary structure, monomer. Requires Mg(2+) as cofactor.

The protein localises to the cytoplasm. The enzyme catalyses shikimate + ATP = 3-phosphoshikimate + ADP + H(+). It functions in the pathway metabolic intermediate biosynthesis; chorismate biosynthesis; chorismate from D-erythrose 4-phosphate and phosphoenolpyruvate: step 5/7. Its function is as follows. Catalyzes the specific phosphorylation of the 3-hydroxyl group of shikimic acid using ATP as a cosubstrate. The polypeptide is Shikimate kinase (Microcystis aeruginosa (strain NIES-843 / IAM M-2473)).